Here is a 569-residue protein sequence, read N- to C-terminus: Urease subunit alpha (569 aa).

Positions 131–569 (GGIDTHIHFI…LPMAQRYFLL (439 aa)) constitute a Urease domain. Residues His-136, His-138, and Lys-219 each contribute to the Ni(2+) site. Lys-219 is modified (N6-carboxylysine). Residue His-221 participates in substrate binding. His-248 and His-274 together coordinate Ni(2+). The active-site Proton donor is the His-322. Ni(2+) is bound at residue Asp-362.

This sequence belongs to the metallo-dependent hydrolases superfamily. Urease alpha subunit family. As to quaternary structure, heterotrimer of UreA (gamma), UreB (beta) and UreC (alpha) subunits. Three heterotrimers associate to form the active enzyme. Ni cation serves as cofactor. Carboxylation allows a single lysine to coordinate two nickel ions.

Its subcellular location is the cytoplasm. The enzyme catalyses urea + 2 H2O + H(+) = hydrogencarbonate + 2 NH4(+). Its pathway is nitrogen metabolism; urea degradation; CO(2) and NH(3) from urea (urease route): step 1/1. This chain is Urease subunit alpha, found in Synechococcus sp. (strain RCC307).